The sequence spans 283 residues: ATP phosphoribosyltransferase (283 aa).

The protein belongs to the ATP phosphoribosyltransferase family. Long subfamily. As to quaternary structure, equilibrium between an active dimeric form, an inactive hexameric form and higher aggregates. Interconversion between the various forms is largely reversible and is influenced by the natural substrates and inhibitors of the enzyme. Requires Mg(2+) as cofactor.

It is found in the cytoplasm. It catalyses the reaction 1-(5-phospho-beta-D-ribosyl)-ATP + diphosphate = 5-phospho-alpha-D-ribose 1-diphosphate + ATP. It functions in the pathway amino-acid biosynthesis; L-histidine biosynthesis; L-histidine from 5-phospho-alpha-D-ribose 1-diphosphate: step 1/9. Its activity is regulated as follows. Feedback inhibited by histidine. Catalyzes the condensation of ATP and 5-phosphoribose 1-diphosphate to form N'-(5'-phosphoribosyl)-ATP (PR-ATP). Has a crucial role in the pathway because the rate of histidine biosynthesis seems to be controlled primarily by regulation of HisG enzymatic activity. This Mycobacterium sp. (strain JLS) protein is ATP phosphoribosyltransferase.